We begin with the raw amino-acid sequence, 214 residues long: Fruiting body protein SC14 (214 aa).

Residues Met-1 to Ala-18 form the signal peptide. Asn-61 and Asn-144 each carry an N-linked (GlcNAc...) asparagine glycan. Residues Leu-72–Tyr-195 enclose the SCP domain.

The protein belongs to the CRISP family.

It is found in the secreted. This chain is Fruiting body protein SC14 (SC14), found in Schizophyllum commune (Split gill fungus).